The sequence spans 811 residues: Probable inorganic carbon transporter subunit DabA (811 aa).

Residues cysteine 336, aspartate 338, histidine 498, and cysteine 513 each contribute to the Zn(2+) site.

The protein belongs to the inorganic carbon transporter (TC 9.A.2) DabA family. In terms of assembly, forms a complex with DabB. It depends on Zn(2+) as a cofactor.

The protein localises to the cell inner membrane. In terms of biological role, part of an energy-coupled inorganic carbon pump. This is Probable inorganic carbon transporter subunit DabA from Rhodospirillum centenum (strain ATCC 51521 / SW).